Reading from the N-terminus, the 239-residue chain is Phosphoribosylaminoimidazole-succinocarboxamide synthase (239 aa).

The protein belongs to the SAICAR synthetase family.

It catalyses the reaction 5-amino-1-(5-phospho-D-ribosyl)imidazole-4-carboxylate + L-aspartate + ATP = (2S)-2-[5-amino-1-(5-phospho-beta-D-ribosyl)imidazole-4-carboxamido]succinate + ADP + phosphate + 2 H(+). The protein operates within purine metabolism; IMP biosynthesis via de novo pathway; 5-amino-1-(5-phospho-D-ribosyl)imidazole-4-carboxamide from 5-amino-1-(5-phospho-D-ribosyl)imidazole-4-carboxylate: step 1/2. The chain is Phosphoribosylaminoimidazole-succinocarboxamide synthase from Nitratiruptor sp. (strain SB155-2).